The sequence spans 247 residues: MLFCCIICSVLRKNSRAHDEIRPVKIIRGWNIYAEGSALIAFGNTRVLCNATFQRGVPPFLRGQRSGWITAEYAMLPRSGTERSDRESVKGKISGRSHEISRLIGRSMRAILDRYALEENTIILDCDVLQADGGTRTAAITGSYIALYDALVWAKNQKILSKHPLTDSVSAVSVGLVGDQIFLDLDYSEDSNAQADINLVFTGSGKLVEIQGTAEKSPFSYGQFEQMMELAKTGCQALKEIQAASLD.

Residues R96 and 134 to 136 (GTR) each bind phosphate.

The protein belongs to the RNase PH family. Homohexameric ring arranged as a trimer of dimers.

It carries out the reaction tRNA(n+1) + phosphate = tRNA(n) + a ribonucleoside 5'-diphosphate. Its function is as follows. Phosphorolytic 3'-5' exoribonuclease that plays an important role in tRNA 3'-end maturation. Removes nucleotide residues following the 3'-CCA terminus of tRNAs; can also add nucleotides to the ends of RNA molecules by using nucleoside diphosphates as substrates, but this may not be physiologically important. Probably plays a role in initiation of 16S rRNA degradation (leading to ribosome degradation) during starvation. The chain is Ribonuclease PH from Tropheryma whipplei (strain TW08/27) (Whipple's bacillus).